The following is a 450-amino-acid chain: tRNA modification GTPase MnmE (450 aa).

3 residues coordinate (6S)-5-formyl-5,6,7,8-tetrahydrofolate: Arg-23, Glu-81, and Lys-120. The TrmE-type G domain occupies Gly-216–Gly-373. GTP-binding positions include Asn-226–Ser-231, Thr-245–Thr-251, Asp-270–Gly-273, and Asn-337–Asp-340. The Mg(2+) site is built by Ser-230 and Thr-251. (6S)-5-formyl-5,6,7,8-tetrahydrofolate is bound at residue Lys-450.

It belongs to the TRAFAC class TrmE-Era-EngA-EngB-Septin-like GTPase superfamily. TrmE GTPase family. In terms of assembly, homodimer. Heterotetramer of two MnmE and two MnmG subunits. It depends on K(+) as a cofactor.

It localises to the cytoplasm. Exhibits a very high intrinsic GTPase hydrolysis rate. Involved in the addition of a carboxymethylaminomethyl (cmnm) group at the wobble position (U34) of certain tRNAs, forming tRNA-cmnm(5)s(2)U34. This is tRNA modification GTPase MnmE from Dichelobacter nodosus (strain VCS1703A).